We begin with the raw amino-acid sequence, 515 residues long: 2,3-bisphosphoglycerate-independent phosphoglycerate mutase (515 aa).

Residues Asp-14 and Ser-64 each contribute to the Mn(2+) site. Residue Ser-64 is the Phosphoserine intermediate of the active site. Substrate is bound by residues His-125, 155–156 (RD), Arg-187, Arg-193, 263–266 (RADR), and Lys-337. Mn(2+) is bound by residues Asp-404, His-408, Asp-445, His-446, and His-464.

The protein belongs to the BPG-independent phosphoglycerate mutase family. In terms of assembly, monomer. It depends on Mn(2+) as a cofactor.

It carries out the reaction (2R)-2-phosphoglycerate = (2R)-3-phosphoglycerate. It functions in the pathway carbohydrate degradation; glycolysis; pyruvate from D-glyceraldehyde 3-phosphate: step 3/5. Catalyzes the interconversion of 2-phosphoglycerate and 3-phosphoglycerate. The sequence is that of 2,3-bisphosphoglycerate-independent phosphoglycerate mutase from Pseudomonas aeruginosa (strain UCBPP-PA14).